We begin with the raw amino-acid sequence, 410 residues long: Chlorobenzene dioxygenase, ferredoxin reductase component (410 aa).

Residue 4–35 (HVAIIGNGVAGFTTAQALRAEGFEGRISLIGN) coordinates FAD. 145–173 (RLVIAGGGLIGCEVATTARKLGLAVTILE) is a binding site for NAD(+).

It belongs to the bacterial ring-hydroxylating dioxygenase ferredoxin reductase family. As to quaternary structure, this dioxygenase system consists of four proteins: the two subunits of the oxygenase component (TecA1 and TecA2), a ferredoxin (TecA3) and a ferredoxin reductase (TecA4). FAD is required as a cofactor.

It carries out the reaction 2 reduced [2Fe-2S]-[ferredoxin] + NAD(+) + H(+) = 2 oxidized [2Fe-2S]-[ferredoxin] + NADH. Its pathway is aromatic compound metabolism. Part of the chlorobenzene dioxygenase system that catalyzes the dihydroxylation of a range of aromatic compounds, including chlorinated benzenes and toluenes, and dinuclear aromatics such as biphenyl and dibenzo-p-dioxin. The chain is Chlorobenzene dioxygenase, ferredoxin reductase component from Cupriavidus sp. (strain PS12).